A 116-amino-acid chain; its full sequence is Vesicle-associated membrane protein 5 (116 aa).

The Cytoplasmic portion of the chain corresponds to methionine 1 to cysteine 72. Residues glutamate 5–glutamate 65 enclose the v-SNARE coiled-coil homology domain. Residues serine 41, serine 48, and serine 49 each carry the phosphoserine modification. Residues valine 73–leucine 93 form a helical; Anchor for type IV membrane protein membrane-spanning segment. Residues proline 94–asparagine 116 are Vesicular-facing. The interval serine 96–asparagine 116 is disordered.

The protein belongs to the synaptobrevin family. Post-translationally, (Microbial infection) Targeted and hydrolyzed by C.botulinum neurotoxin type X (BoNT/X) which hydrolyzes the 40-Arg-|-Ser-41 bond and probably inhibits neurotransmitter release. It remains unknown whether BoNT/X is ever produced, or what organisms it targets.

The protein resides in the cell membrane. It is found in the endomembrane system. Its subcellular location is the golgi apparatus. It localises to the trans-Golgi network membrane. In terms of biological role, may participate in trafficking events that are associated with myogenesis, such as myoblast fusion and/or GLUT4 trafficking. The protein is Vesicle-associated membrane protein 5 (VAMP5) of Homo sapiens (Human).